The sequence spans 477 residues: Aspartyl/glutamyl-tRNA(Asn/Gln) amidotransferase subunit B (477 aa).

The protein belongs to the GatB/GatE family. GatB subfamily. Heterotrimer of A, B and C subunits.

It carries out the reaction L-glutamyl-tRNA(Gln) + L-glutamine + ATP + H2O = L-glutaminyl-tRNA(Gln) + L-glutamate + ADP + phosphate + H(+). It catalyses the reaction L-aspartyl-tRNA(Asn) + L-glutamine + ATP + H2O = L-asparaginyl-tRNA(Asn) + L-glutamate + ADP + phosphate + 2 H(+). Functionally, allows the formation of correctly charged Asn-tRNA(Asn) or Gln-tRNA(Gln) through the transamidation of misacylated Asp-tRNA(Asn) or Glu-tRNA(Gln) in organisms which lack either or both of asparaginyl-tRNA or glutaminyl-tRNA synthetases. The reaction takes place in the presence of glutamine and ATP through an activated phospho-Asp-tRNA(Asn) or phospho-Glu-tRNA(Gln). In Nitrosococcus oceani (strain ATCC 19707 / BCRC 17464 / JCM 30415 / NCIMB 11848 / C-107), this protein is Aspartyl/glutamyl-tRNA(Asn/Gln) amidotransferase subunit B.